Here is a 204-residue protein sequence, read N- to C-terminus: Dual specificity protein phosphatase 18 (204 aa).

In terms of domain architecture, Tyrosine-protein phosphatase spans 19-160; the sequence is GLSQITKSLF…LIHYEFQLFG (142 aa). The segment at 95 to 141 is sufficient for mitochondrial localization; sequence MKQGRTLLHCAAGVSRSAALCLAYLMKYHVMSLLDAHAWTKSRRPII. Cys-104 serves as the catalytic Phosphocysteine intermediate.

It belongs to the protein-tyrosine phosphatase family. Non-receptor class dual specificity subfamily.

The protein resides in the cytoplasm. Its subcellular location is the nucleus. It is found in the mitochondrion inner membrane. The catalysed reaction is O-phospho-L-tyrosyl-[protein] + H2O = L-tyrosyl-[protein] + phosphate. It catalyses the reaction O-phospho-L-seryl-[protein] + H2O = L-seryl-[protein] + phosphate. It carries out the reaction O-phospho-L-threonyl-[protein] + H2O = L-threonyl-[protein] + phosphate. Its function is as follows. Can dephosphorylate single and diphosphorylated synthetic MAPK peptides, with preference for the phosphotyrosine and diphosphorylated forms over phosphothreonine. In vitro, dephosphorylates p-nitrophenyl phosphate (pNPP). This chain is Dual specificity protein phosphatase 18 (Dusp18), found in Rattus norvegicus (Rat).